The following is a 659-amino-acid chain: MAATTTTTNAGRSMASWKRLSTLIAAFTLSWTSSFVAAAGSADYFVHDLPGAPDGPLVKMHAGHIEVTPDNNGNLFFWHFQNKHIANKQRTVIWLNGGPGCSSEDGALMEIGPYRLKDENTLVYNDGAWNEFANVLFVDNPVGTGFSYVDTNAYIHELTEMAANFVTFLERWFALFPEYEHDDLYIAGESYAGQHIPYIAQAILERNKNAGPVNRKWNLSGLLIGNGWVSPKEQYDAYLQFAYEKDIVKKGTDLANKLEIQQRICQKEIAVKPDKIDYPECEAILQDMLQLTAGGVGASGKNQCYNMYDVRLKDDYPSCGMAWPPDLKSVTPYLRKKEVIKALNINDNKSTGWTECNGQVGMNFNPKTKPSITLLPDILSAGVPILLFSGAEDLICNHLGTEALISNMEWNGGKGFELTPGTWAPRRDWTFEGEPAGFWQQARNLTYVLFYNSSHMVPFDYPRRTRDMLDRFMGVDISSIGGQPTDSRLDGEKLPETTVGGAAGNSTSNQAAEKAKLEMAKWEAYRKSGELVLVIVIVAAGVWGWFVWKERRKTAGQGYMGVATGERHSISNNPGPRGNLSGGGDRTRGQGLAGFRNKRSGRRDVEAQDFDESELDDLHLSKPEDPHADSRYSIGGASDDEEEQKPGKGSSSRQPGGRS.

The first 38 residues, 1–38, serve as a signal peptide directing secretion; the sequence is MAATTTTTNAGRSMASWKRLSTLIAAFTLSWTSSFVAA. The Lumenal segment spans residues 39–527; sequence AGSADYFVHD…EMAKWEAYRK (489 aa). Serine 190 is an active-site residue. Asparagine 218 and asparagine 348 each carry an N-linked (GlcNAc...) asparagine glycan. Aspartate 393 is a catalytic residue. N-linked (GlcNAc...) asparagine glycosylation is found at asparagine 444 and asparagine 452. Histidine 455 is an active-site residue. A disordered region spans residues 480–507; it reads IGGQPTDSRLDGEKLPETTVGGAAGNST. A glycan (N-linked (GlcNAc...) asparagine) is linked at asparagine 505. A helical membrane pass occupies residues 528–548; sequence SGELVLVIVIVAAGVWGWFVW. Residues 549–659 lie on the Cytoplasmic side of the membrane; it reads KERRKTAGQG…SSSRQPGGRS (111 aa). Residues 565–659 form a disordered region; sequence GERHSISNNP…SSSRQPGGRS (95 aa). The segment covering 616–630 has biased composition (basic and acidic residues); the sequence is DDLHLSKPEDPHADS. Residues 649-659 are compositionally biased toward polar residues; it reads GSSSRQPGGRS.

The protein belongs to the peptidase S10 family.

It localises to the golgi apparatus. Its subcellular location is the trans-Golgi network membrane. It catalyses the reaction Preferential release of a C-terminal arginine or lysine residue.. Functionally, protease with a carboxypeptidase B-like function involved in the C-terminal processing of the lysine and arginine residues from protein precursors. Promotes cell fusion and is involved in the programmed cell death. This chain is Pheromone-processing carboxypeptidase kex1 (kex1), found in Neurospora crassa (strain ATCC 24698 / 74-OR23-1A / CBS 708.71 / DSM 1257 / FGSC 987).